We begin with the raw amino-acid sequence, 532 residues long: MALRLPALLDANAPWGPPSTVPEDLKFDDVPYAPFSKGDKLGKVADWAAETKDGKDQKRTQFGKNFRDPYHAYGASSASFFTNEDAEELSSFSVVDNAKNANKPRGTATVLKTRGGAPRGGSFAGRGGSQRGGRFQNQPGRGPVGGQRGPNPRFGKSKFGWRDFDKPQRIRNASVDITDDWTEIQEITYSEMQKLSYDVAQGVEIDTYGDLFPYDRKFDRTNNITKLAHLGRTVFNTTTSEDPIMQELAKDPANRIFITDTILSQIMCTTKSVAPWDIVITKKGEQLFFDKREGGPLDFITVDENAADPPADSTDKDNINSSANLGFEATLINQNFASNAITEDPKSKVSYKANPFSNNDSNVLCHAYKYKKFNLSDDPEGAPLNLILRTEVDALGPDGTTLNLRVLNEYGSSEWKNKFNTGRGAIIAAELKHNLNKISRWTVQSILGDVDQMKIGFASRVSPKDNTQHNIIGVVSREPKQFAEQINVNLNNGWGIFKSVVNIATAKDDGKYVLVKDPNNPAVKIYKPAAGF.

Residues 108–161 form a disordered region; the sequence is ATVLKTRGGAPRGGSFAGRGGSQRGGRFQNQPGRGPVGGQRGPNPRFGKSKFGW. Residues 117-131 show a composition bias toward gly residues; it reads APRGGSFAGRGGSQR. Positions 132–141 are enriched in low complexity; that stretch reads GGRFQNQPGR. An RNA gate region spans residues 296 to 310; it reads PLDFITVDENAADPP.

This sequence belongs to the eIF-3 subunit D family. In terms of assembly, component of the eukaryotic translation initiation factor 3 (eIF-3) complex.

Its subcellular location is the cytoplasm. Functionally, mRNA cap-binding component of the eukaryotic translation initiation factor 3 (eIF-3) complex, which is involved in protein synthesis of a specialized repertoire of mRNAs and, together with other initiation factors, stimulates binding of mRNA and methionyl-tRNAi to the 40S ribosome. The eIF-3 complex specifically targets and initiates translation of a subset of mRNAs involved in cell proliferation. In the eIF-3 complex, eif3d specifically recognizes and binds the 7-methylguanosine cap of a subset of mRNAs. This is Eukaryotic translation initiation factor 3 subunit D from Yarrowia lipolytica (strain CLIB 122 / E 150) (Yeast).